Reading from the N-terminus, the 184-residue chain is Regulatory protein RecX (184 aa).

The interval Met-1–Arg-21 is disordered.

The protein belongs to the RecX family.

The protein localises to the cytoplasm. In terms of biological role, modulates RecA activity. This is Regulatory protein RecX from Mycolicibacterium vanbaalenii (strain DSM 7251 / JCM 13017 / BCRC 16820 / KCTC 9966 / NRRL B-24157 / PYR-1) (Mycobacterium vanbaalenii).